The sequence spans 229 residues: MVKNNKIQKNKISNSCRMIMSTDPNNILMRHLKNLTDDEFKCIIHRSSDFLYLSDSDYTSITKETLVSEIVEEYPDDCNKILAIIFLVLDKDIDVDIKTKLKPKPAVRFAILDKMTEDIKLTDLVRHYFRYIEQDIPLGPLFKKIDSYRTRAINKYSKELGLATEYFNKYGHLMFYTLPIPYNRFFCRNSIGFLAVLSPTIGHVKAFYKFIEYVSIDDRRKFKKELMSK.

Belongs to the orthopoxvirus OPG034 family.

This is Protein OPG034 (OPG034) from Vaccinia virus (strain Western Reserve) (VACV).